A 455-amino-acid chain; its full sequence is Bifunctional protein GlmU (455 aa).

A pyrophosphorylase region spans residues 1–226 (MSLDIVILAA…PMEVQGANDR (226 aa)). UDP-N-acetyl-alpha-D-glucosamine-binding positions include 8 to 11 (LAAG), K22, Q73, 78 to 79 (GT), 99 to 101 (YGD), G136, E151, N166, and N224. D101 contacts Mg(2+). N224 contributes to the Mg(2+) binding site. Residues 227 to 247 (RQLSELERHYQLREGRRLMAQ) form a linker region. The tract at residues 248-455 (GVTLRDPARF…WKRPEKIKKS (208 aa)) is N-acetyltransferase. 2 residues coordinate UDP-N-acetyl-alpha-D-glucosamine: R330 and K348. Catalysis depends on H360, which acts as the Proton acceptor. UDP-N-acetyl-alpha-D-glucosamine-binding residues include Y363 and N374. Residues A377, 383–384 (NY), S402, A420, and R437 contribute to the acetyl-CoA site.

In the N-terminal section; belongs to the N-acetylglucosamine-1-phosphate uridyltransferase family. This sequence in the C-terminal section; belongs to the transferase hexapeptide repeat family. As to quaternary structure, homotrimer. The cofactor is Mg(2+).

The protein localises to the cytoplasm. It carries out the reaction alpha-D-glucosamine 1-phosphate + acetyl-CoA = N-acetyl-alpha-D-glucosamine 1-phosphate + CoA + H(+). It catalyses the reaction N-acetyl-alpha-D-glucosamine 1-phosphate + UTP + H(+) = UDP-N-acetyl-alpha-D-glucosamine + diphosphate. Its pathway is nucleotide-sugar biosynthesis; UDP-N-acetyl-alpha-D-glucosamine biosynthesis; N-acetyl-alpha-D-glucosamine 1-phosphate from alpha-D-glucosamine 6-phosphate (route II): step 2/2. It participates in nucleotide-sugar biosynthesis; UDP-N-acetyl-alpha-D-glucosamine biosynthesis; UDP-N-acetyl-alpha-D-glucosamine from N-acetyl-alpha-D-glucosamine 1-phosphate: step 1/1. The protein operates within bacterial outer membrane biogenesis; LPS lipid A biosynthesis. In terms of biological role, catalyzes the last two sequential reactions in the de novo biosynthetic pathway for UDP-N-acetylglucosamine (UDP-GlcNAc). The C-terminal domain catalyzes the transfer of acetyl group from acetyl coenzyme A to glucosamine-1-phosphate (GlcN-1-P) to produce N-acetylglucosamine-1-phosphate (GlcNAc-1-P), which is converted into UDP-GlcNAc by the transfer of uridine 5-monophosphate (from uridine 5-triphosphate), a reaction catalyzed by the N-terminal domain. The chain is Bifunctional protein GlmU from Pseudomonas entomophila (strain L48).